Reading from the N-terminus, the 459-residue chain is Serine--tRNA ligase (459 aa).

Residue 254-256 (TAE) participates in L-serine binding. Residues 285 to 287 (RKE) and Val301 each bind ATP. Residue Glu308 participates in L-serine binding. ATP is bound at residue 372–375 (EMVS). Thr408 serves as a coordination point for L-serine.

It belongs to the class-II aminoacyl-tRNA synthetase family. Type-1 seryl-tRNA synthetase subfamily. As to quaternary structure, homodimer. The tRNA molecule binds across the dimer.

It is found in the cytoplasm. It carries out the reaction tRNA(Ser) + L-serine + ATP = L-seryl-tRNA(Ser) + AMP + diphosphate + H(+). The catalysed reaction is tRNA(Sec) + L-serine + ATP = L-seryl-tRNA(Sec) + AMP + diphosphate + H(+). The protein operates within aminoacyl-tRNA biosynthesis; selenocysteinyl-tRNA(Sec) biosynthesis; L-seryl-tRNA(Sec) from L-serine and tRNA(Sec): step 1/1. Its function is as follows. Catalyzes the attachment of serine to tRNA(Ser). Is also able to aminoacylate tRNA(Sec) with serine, to form the misacylated tRNA L-seryl-tRNA(Sec), which will be further converted into selenocysteinyl-tRNA(Sec). In Desulfurococcus amylolyticus (strain DSM 18924 / JCM 16383 / VKM B-2413 / 1221n) (Desulfurococcus kamchatkensis), this protein is Serine--tRNA ligase.